Here is a 98-residue protein sequence, read N- to C-terminus: ESAT-6-like protein EsxM (98 aa).

Belongs to the WXG100 family. CFP-10 subfamily.

It localises to the secreted. The chain is ESAT-6-like protein EsxM (esxM) from Mycobacterium bovis (strain ATCC BAA-935 / AF2122/97).